The primary structure comprises 203 residues: V-type ATP synthase subunit D (203 aa).

Belongs to the V-ATPase D subunit family.

Functionally, produces ATP from ADP in the presence of a proton gradient across the membrane. The chain is V-type ATP synthase subunit D from Streptococcus pneumoniae serotype 19F (strain G54).